Here is a 380-residue protein sequence, read N- to C-terminus: Cytochrome b (380 aa).

The next 4 helical transmembrane spans lie at 33 to 53, 77 to 98, 113 to 133, and 178 to 198; these read FGSLLGLCLATQILTGLFLAM, WLIRNIHANGASFFFICIYMHI, WNIGVVLLLLTMMTAFVGYVL, and FFAFHFLFPFVIAAATVLHLL. 2 residues coordinate heme b: His83 and His97. 2 residues coordinate heme b: His182 and His196. An a ubiquinone-binding site is contributed by His201. The next 4 membrane-spanning stretches (helical) occupy residues 226-246, 288-308, 320-340, and 347-367; these read YKDLLGFVAMLLGLTSLALFA, LGGVLALLFSILVLMVVPILH, LTQFLFWTLVADMLILTWIGG, and FIIIGQIASVIYFTIFLVLAP.

This sequence belongs to the cytochrome b family. The cytochrome bc1 complex contains 3 respiratory subunits (MT-CYB, CYC1 and UQCRFS1), 2 core proteins (UQCRC1 and UQCRC2) and probably 6 low-molecular weight proteins. It depends on heme b as a cofactor.

The protein localises to the mitochondrion inner membrane. Functionally, component of the ubiquinol-cytochrome c reductase complex (complex III or cytochrome b-c1 complex) that is part of the mitochondrial respiratory chain. The b-c1 complex mediates electron transfer from ubiquinol to cytochrome c. Contributes to the generation of a proton gradient across the mitochondrial membrane that is then used for ATP synthesis. This chain is Cytochrome b (mt-cyb), found in Salmo salar (Atlantic salmon).